The sequence spans 210 residues: Fibrillarin-like rRNA/tRNA 2'-O-methyltransferase (210 aa).

S-adenosyl-L-methionine-binding positions include 70–71, 88–89, 113–114, and 133–136; these read TT, EY, DA, and DIAQ.

Belongs to the methyltransferase superfamily. Fibrillarin family. In terms of assembly, interacts with nop5. Component of box C/D small ribonucleoprotein (sRNP) particles that contain rpl7ae, FlpA and nop5, plus a guide RNA.

In terms of biological role, involved in pre-rRNA and tRNA processing. Utilizes the methyl donor S-adenosyl-L-methionine to catalyze the site-specific 2'-hydroxyl methylation of ribose moieties in rRNA and tRNA. Site specificity is provided by a guide RNA that base pairs with the substrate. Methylation occurs at a characteristic distance from the sequence involved in base pairing with the guide RNA. This is Fibrillarin-like rRNA/tRNA 2'-O-methyltransferase from Archaeoglobus fulgidus (strain ATCC 49558 / DSM 4304 / JCM 9628 / NBRC 100126 / VC-16).